The primary structure comprises 315 residues: Kiwa protein KwaB (315 aa).

Component of antiviral defense system Kiwa, composed of KwaA and KwaB. Expression of Kiwa in E.coli (strain MG1655) confers resistance to phages lambda and SECphi18. The protein is Kiwa protein KwaB of Escherichia coli O55:H7 (strain RM12579 / EPEC).